A 372-amino-acid chain; its full sequence is NAD(P)H-quinone oxidoreductase subunit 1 (372 aa).

8 consecutive transmembrane segments (helical) span residues 27–47 (LLWL…GVLV), 97–117 (LLFT…WLII), 128–148 (VGIG…GLLM), 176–196 (LALA…IDIV), 204–224 (FLSW…ICAL), 270–290 (LLVS…ELIA), 308–328 (SLGI…AILL), and 351–371 (ISLV…FAFG).

This sequence belongs to the complex I subunit 1 family. As to quaternary structure, NDH-1 is composed of at least 11 different subunits.

Its subcellular location is the cellular thylakoid membrane. The catalysed reaction is a plastoquinone + NADH + (n+1) H(+)(in) = a plastoquinol + NAD(+) + n H(+)(out). It carries out the reaction a plastoquinone + NADPH + (n+1) H(+)(in) = a plastoquinol + NADP(+) + n H(+)(out). Functionally, NDH-1 shuttles electrons from an unknown electron donor, via FMN and iron-sulfur (Fe-S) centers, to quinones in the respiratory and/or the photosynthetic chain. The immediate electron acceptor for the enzyme in this species is believed to be plastoquinone. Couples the redox reaction to proton translocation, and thus conserves the redox energy in a proton gradient. The protein is NAD(P)H-quinone oxidoreductase subunit 1 of Prochlorococcus marinus (strain SARG / CCMP1375 / SS120).